Reading from the N-terminus, the 274-residue chain is 2,3,4,5-tetrahydropyridine-2,6-dicarboxylate N-succinyltransferase (274 aa).

The substrate site is built by Arg105 and Asp142.

Belongs to the transferase hexapeptide repeat family. Homotrimer.

The protein localises to the cytoplasm. The catalysed reaction is (S)-2,3,4,5-tetrahydrodipicolinate + succinyl-CoA + H2O = (S)-2-succinylamino-6-oxoheptanedioate + CoA. The protein operates within amino-acid biosynthesis; L-lysine biosynthesis via DAP pathway; LL-2,6-diaminopimelate from (S)-tetrahydrodipicolinate (succinylase route): step 1/3. The polypeptide is 2,3,4,5-tetrahydropyridine-2,6-dicarboxylate N-succinyltransferase (Thiobacillus denitrificans (strain ATCC 25259 / T1)).